The primary structure comprises 559 residues: Small ribosomal subunit protein uS3m (559 aa).

The tract at residues 113–134 (EGTEEERNEVRGRGAGKRVESI) is disordered. The span at 120-134 (NEVRGRGAGKRVESI) shows a compositional bias: basic and acidic residues.

This sequence belongs to the universal ribosomal protein uS3 family.

It is found in the mitochondrion. The protein is Small ribosomal subunit protein uS3m (RPS3) of Zea mays (Maize).